A 120-amino-acid chain; its full sequence is NAD(P)H-quinone oxidoreductase subunit 3, chloroplastic (120 aa).

3 helical membrane passes run 9–29 (IFWA…LISG), 64–84 (MFAL…PWAM), and 88–108 (VLGV…ILGL).

It belongs to the complex I subunit 3 family. NDH is composed of at least 16 different subunits, 5 of which are encoded in the nucleus.

The protein resides in the plastid. Its subcellular location is the chloroplast thylakoid membrane. It carries out the reaction a plastoquinone + NADH + (n+1) H(+)(in) = a plastoquinol + NAD(+) + n H(+)(out). It catalyses the reaction a plastoquinone + NADPH + (n+1) H(+)(in) = a plastoquinol + NADP(+) + n H(+)(out). Functionally, NDH shuttles electrons from NAD(P)H:plastoquinone, via FMN and iron-sulfur (Fe-S) centers, to quinones in the photosynthetic chain and possibly in a chloroplast respiratory chain. The immediate electron acceptor for the enzyme in this species is believed to be plastoquinone. Couples the redox reaction to proton translocation, and thus conserves the redox energy in a proton gradient. This chain is NAD(P)H-quinone oxidoreductase subunit 3, chloroplastic, found in Draba nemorosa (Woodland whitlowgrass).